An 801-amino-acid chain; its full sequence is Protein 4.1 (801 aa).

The segment at 1–187 (MTTEKGLLAE…GESKASHKVV (187 aa)) is disordered. A compositionally biased stretch (low complexity) spans 45-58 (EQSQESPSTTSPST). The segment covering 88-107 (SDEKEVELLGEKGQDQKDVD) has biased composition (basic and acidic residues). Acidic residues predominate over residues 108–117 (EGLGEQLEDD). The span at 141 to 151 (SLSSAETQPAQ) shows a compositional bias: polar residues. Residues 154–166 (QKEDQDPEADCED) are compositionally biased toward acidic residues. Residues 167 to 182 (VEGKEPIKKPEGESKA) are compositionally biased toward basic and acidic residues. Residues 193-474 (MRCKVTLLDD…EHHTFFRLTS (282 aa)) enclose the FERM domain. The segment at 477 to 587 (SIPKHRFLSL…GMPNQRESPK (111 aa)) is hydrophilic. Residues 516–613 (RTGSKRASRS…DKVKDLEKTQ (98 aa)) form a disordered region. The segment covering 563–577 (RVEEMPKKTEEKPKE) has biased composition (basic and acidic residues). The interval 588-651 (DVKATQQDSP…WDKRLSTHSP (64 aa)) is spectrin--actin-binding. Residues 591-601 (ATQQDSPSPTV) show a composition bias toward polar residues. Basic and acidic residues predominate over residues 604–613 (DKVKDLEKTQ). Residues 653–801 (RTLSFNGQVQ…GVVHQETEIA (149 aa)) form a C-terminal (CTD) region.

As to quaternary structure, binds with a high affinity to glycophorin and with lower affinity to band III protein. Associates with the nuclear mitotic apparatus. Binds calmodulin. In terms of processing, phosphorylated at multiple sites by different protein kinases and each phosphorylation event selectively modulates the protein's functions. Found exclusively in photoreceptors following the terminal mitosis of retinal neurons. When retinal synaptogenesis is complete, protein 4.1 is also expressed in the inner retina. In adult amphibian retinas, protein 4.1 is detected in photoreceptors, bipolar cells, and ganglion cell axons.

The protein localises to the nucleus. The protein resides in the cytoplasm. It is found in the cytoskeleton. Its subcellular location is the cell cortex. Functionally, protein 4.1 is a major structural element of the erythrocyte membrane skeleton. It plays a key role in regulating membrane physical properties of mechanical stability and deformability by stabilizing spectrin-actin interaction. May be required for dynein-dynactin complex and NUMA1 recruitment at the mitotic cell cortex during anaphase. In Xenopus laevis (African clawed frog), this protein is Protein 4.1.